A 247-amino-acid chain; its full sequence is Cell division protein ZapD (247 aa).

The protein belongs to the ZapD family. In terms of assembly, interacts with FtsZ.

The protein localises to the cytoplasm. In terms of biological role, cell division factor that enhances FtsZ-ring assembly. Directly interacts with FtsZ and promotes bundling of FtsZ protofilaments, with a reduction in FtsZ GTPase activity. This is Cell division protein ZapD from Shigella boydii serotype 18 (strain CDC 3083-94 / BS512).